The following is a 222-amino-acid chain: Transmembrane protein 54 (222 aa).

4 consecutive transmembrane segments (helical) span residues 22-42 (LVLV…HGTV), 62-82 (ILSV…IVLS), 100-120 (ACAL…AMTF), and 155-175 (SSLC…VFAV).

The protein belongs to the TMEM54 family. As to expression, ubiquitously expressed in cancer cell lines.

Its subcellular location is the membrane. This is Transmembrane protein 54 (TMEM54) from Homo sapiens (Human).